The chain runs to 209 residues: MSNKKRSASSSRWLQEHFSDKYVIQAQKKGLRSRAWFKLDEIQQSDKLFKPGMTVVDLGAAPGGWSQYVVTQIGGKGRVIACDLLPMDPIVGVDFLQGDFRDELVLKALLERVGDKKVQVVMCDMAPNMSGTPAVDIPKSMYLVELALDMCRDVLAPGGSFLVKVFQGDGFDEYLREIRSLFTKVKIRKPDASRARSREVYIVATGRKL.

Residues G63, W65, D83, D99, and D124 each contribute to the S-adenosyl-L-methionine site. K164 serves as the catalytic Proton acceptor.

The protein belongs to the class I-like SAM-binding methyltransferase superfamily. RNA methyltransferase RlmE family.

It is found in the cytoplasm. It catalyses the reaction uridine(2552) in 23S rRNA + S-adenosyl-L-methionine = 2'-O-methyluridine(2552) in 23S rRNA + S-adenosyl-L-homocysteine + H(+). Functionally, specifically methylates the uridine in position 2552 of 23S rRNA at the 2'-O position of the ribose in the fully assembled 50S ribosomal subunit. This is Ribosomal RNA large subunit methyltransferase E from Yersinia enterocolitica serotype O:8 / biotype 1B (strain NCTC 13174 / 8081).